The primary structure comprises 905 residues: Nitrate reductase [NADPH] (905 aa).

The tract at residues M1–S42 is disordered. Mo-molybdopterin is bound at residue C179. A Cytochrome b5 heme-binding domain is found at N546–D621. Positions 581 and 604 each coordinate heme. Residues K648–H759 enclose the FAD-binding FR-type domain. Residues R702–T705, L719–Y723, V733–T735, S783, and T786 contribute to the FAD site. NADP(+) is bound at residue L875 to M884.

Belongs to the nitrate reductase family. Homodimer. Requires FAD as cofactor. Heme is required as a cofactor. It depends on Mo-molybdopterin as a cofactor.

It catalyses the reaction nitrite + NADP(+) + H2O = nitrate + NADPH + H(+). Functionally, nitrate reductase is a key enzyme involved in the first step of nitrate assimilation in plants, fungi and bacteria. This Fusarium oxysporum (Fusarium vascular wilt) protein is Nitrate reductase [NADPH] (NIA).